We begin with the raw amino-acid sequence, 1346 residues long: Adhesion G protein-coupled receptor A3 (1346 aa).

The N-terminal stretch at 1–21 (MSVLCVLLLAFVLPLRGSSSA) is a signal peptide. Positions 18-45 (SSSAGSTECKTYDERSRSAGKSSPSGAT) are disordered. Topologically, residues 22–739 (GSTECKTYDE…NVFIFRPLHP (718 aa)) are extracellular. LRR repeat units follow at residues 66 to 90 (FPNR…SFVG), 91 to 114 (LSSL…AFYG), 116 to 138 (FSLK…VFKG), and 139 to 162 (LTNL…IFDS). The LRRCT domain occupies 176 to 223 (LLCDCNLQWLVVWIKEKAIGVKETRCSFPRSLQGQLITTLRAETLTCD). Positions 229–327 (PSFQMTPSQH…GNNTRTVHIV (99 aa)) constitute an Ig-like domain. Cys251 and Cys311 are joined by a disulfide. 3 LRR repeats span residues 503 to 529 (LQRI…ALEA), 574 to 600 (TSNL…LFSS), and 611 to 632 (VYKL…GNSS). The GAIN-B domain occupies 563-728 (PERQLSFKCN…AVLMDLNRTG (166 aa)). A GPS region spans residues 679-728 (PAFWNFSLQGGQGGWQSDGCRILHQDDNFTTVSCHSLNSYAVLMDLNRTG). Cys698 and Cys712 are oxidised to a cystine. The helical transmembrane segment at 740–760 (VIYSTALVLVLCLLSVIVSYI) threads the bilayer. Topologically, residues 761 to 773 (YHHKSVRISKKCW) are cytoplasmic. The chain crosses the membrane as a helical span at residues 774 to 794 (HMLVNLCLHILLTCAVFVGGI). Residues 795–804 (NQTYNASVCQ) are Extracellular-facing. A helical membrane pass occupies residues 805-825 (AMGIVLHYSTLATALWSGVTA). Topologically, residues 826–854 (RNIYKQVTRKAKRYEELDEPPPPPRPMLR) are cytoplasmic. The chain crosses the membrane as a helical span at residues 855-875 (FYLIGGGIPIIVCGITAAANI). The Extracellular segment spans residues 876 to 897 (KNYGSQVNAPYCWMAWEPSLGA). A helical membrane pass occupies residues 898–918 (FYGPAAFIVFVDCMYFLSILI). Residues 919 to 977 (QLRRHPERRFELKEQSEEQQHLSVTEATEITPVHLESSPTAQPVPMSALENEHTFVSQL) lie on the Cytoplasmic side of the membrane. Residues 978–998 (MGVAGSLTLYAALWVFGALAI) form a helical membrane-spanning segment. Residues 999–1005 (SQEHPAD) lie on the Extracellular side of the membrane. Residues 1006 to 1026 (LVFACLFGALALGLGAFLVAH) form a helical membrane-spanning segment. Residues 1027–1346 (HCVNRQDMRR…TGLWKHETTV (320 aa)) lie on the Cytoplasmic side of the membrane. The segment covering 1157-1169 (SVNNNNLPGNANI) has biased composition (polar residues). 2 disordered regions span residues 1157–1188 (SVNN…RASR) and 1202–1284 (SVEG…DGSE). Composition is skewed to basic residues over residues 1173–1187 (PGRH…HRAS) and 1212–1226 (NKRH…RNSR). The span at 1238 to 1252 (QSQLQQDSSDAASTS) shows a compositional bias: low complexity. The segment covering 1266-1280 (IGNGFGHGISNGGLL) has biased composition (gly residues). A PDZ-binding motif is present at residues 1344 to 1346 (TTV).

It belongs to the G-protein coupled receptor 2 family. Adhesion G-protein coupled receptor (ADGR) subfamily. Interacts (via PDZ-binding motif) with disheveled proteins; leading to the localization of dishevelled proteins to specific membrane subdomains. In terms of tissue distribution, ubiquitously expressed at very low levels.

The protein resides in the cell membrane. Its function is as follows. Orphan receptor that acts as a critical modulator of planar cell polarity during gastrulation. Controls the localization of dishevelled. The polypeptide is Adhesion G protein-coupled receptor A3 (adgra3) (Danio rerio (Zebrafish)).